We begin with the raw amino-acid sequence, 762 residues long: 5-methyltetrahydropteroyltriglutamate--homocysteine methyltransferase (762 aa).

Residues 16 to 19 (RELK) and lysine 117 contribute to the 5-methyltetrahydropteroyltri-L-glutamate site. L-homocysteine is bound by residues 438–440 (IGS) and glutamate 491. L-methionine is bound by residues 438-440 (IGS) and glutamate 491. 5-methyltetrahydropteroyltri-L-glutamate-binding positions include 522 to 523 (RC) and tryptophan 568. L-homocysteine is bound at residue aspartate 606. Aspartate 606 is an L-methionine binding site. Glutamate 612 is a 5-methyltetrahydropteroyltri-L-glutamate binding site. 3 residues coordinate Zn(2+): histidine 648, cysteine 650, and glutamate 672. The active-site Proton donor is histidine 701. A Zn(2+)-binding site is contributed by cysteine 733.

Belongs to the vitamin-B12 independent methionine synthase family. Zn(2+) is required as a cofactor.

It catalyses the reaction 5-methyltetrahydropteroyltri-L-glutamate + L-homocysteine = tetrahydropteroyltri-L-glutamate + L-methionine. The protein operates within amino-acid biosynthesis; L-methionine biosynthesis via de novo pathway; L-methionine from L-homocysteine (MetE route): step 1/1. In terms of biological role, catalyzes the transfer of a methyl group from 5-methyltetrahydrofolate to homocysteine resulting in methionine formation. The polypeptide is 5-methyltetrahydropteroyltriglutamate--homocysteine methyltransferase (Pseudomonas fluorescens (strain ATCC BAA-477 / NRRL B-23932 / Pf-5)).